The following is a 347-amino-acid chain: Olfactory receptor 1L6 (347 aa).

Residues 1–62 (MSYFYRLKLM…GLSSNPQLQK (62 aa)) are Extracellular-facing. N-linked (GlcNAc...) asparagine glycosylation is present at N41. A helical membrane pass occupies residues 63–86 (PLFAIFLIMYLLAAVGNVLIIPAI). At 87-94 (YSDPRLHT) the chain is on the cytoplasmic side. Residues 95-116 (PMYFFLSNLSFMDICFTTVIVP) traverse the membrane as a helical segment. At 117 to 137 (KMLVNFLSETKVISYVGCLAQ) the chain is on the extracellular side. The cysteines at positions 134 and 226 are disulfide-linked. The chain crosses the membrane as a helical span at residues 138–157 (MYFFMAFGNTDSYLLASMAI). The Cytoplasmic portion of the chain corresponds to 158-176 (DRLVAICNPLHYDVVMKPR). Residues 177–195 (HCLLMLLGSCSISHLHSLF) traverse the membrane as a helical segment. Topologically, residues 196–233 (RVLLMSRLSFCASHIIKHFFCDTQPVLKLSCSDTSSSQ) are extracellular. The helical transmembrane segment at 234–256 (MVVMTETLAVIVTPFLCIIFSYL) threads the bilayer. Residues 257–273 (RIMVTVLRIPSAAGKWK) are Cytoplasmic-facing. Residues 274–296 (AFSTCGSHLTAVALFYGSIIYVY) traverse the membrane as a helical segment. Over 297 to 309 (FRPLSMYSVVRDR) the chain is Extracellular. A helical transmembrane segment spans residues 310–329 (VATVMYTVVTPMLNPFIYSL). Over 330–347 (RNKDMKRGLKKLQDRIYR) the chain is Cytoplasmic.

The protein belongs to the G-protein coupled receptor 1 family.

The protein resides in the cell membrane. Functionally, odorant receptor. The polypeptide is Olfactory receptor 1L6 (OR1L6) (Homo sapiens (Human)).